We begin with the raw amino-acid sequence, 256 residues long: Triosephosphate isomerase (256 aa).

12 to 14 lines the substrate pocket; sequence NWK. His-99 (electrophile) is an active-site residue. Glu-169 acts as the Proton acceptor in catalysis. Residues Gly-175, Ser-214, and 235–236 contribute to the substrate site; that span reads GG.

Belongs to the triosephosphate isomerase family. In terms of assembly, homodimer.

It localises to the cytoplasm. It carries out the reaction D-glyceraldehyde 3-phosphate = dihydroxyacetone phosphate. It participates in carbohydrate biosynthesis; gluconeogenesis. The protein operates within carbohydrate degradation; glycolysis; D-glyceraldehyde 3-phosphate from glycerone phosphate: step 1/1. Involved in the gluconeogenesis. Catalyzes stereospecifically the conversion of dihydroxyacetone phosphate (DHAP) to D-glyceraldehyde-3-phosphate (G3P). This is Triosephosphate isomerase from Rhizobium meliloti (strain 1021) (Ensifer meliloti).